Reading from the N-terminus, the 346-residue chain is Very-long-chain 3-oxoacyl-CoA reductase (346 aa).

A helical membrane pass occupies residues 26–46; sequence GASALLAAGSLFVVSRALVFV. NADP(+) is bound by residues V71, D126, D134, N153, Y220, K224, I253, and S255. Catalysis depends on Y220, which acts as the Proton donor. The Lowers pKa of active site Tyr role is filled by K224.

Belongs to the short-chain dehydrogenases/reductases (SDR) family.

The protein resides in the endoplasmic reticulum membrane. It carries out the reaction a very-long-chain (3R)-3-hydroxyacyl-CoA + NADP(+) = a very-long-chain 3-oxoacyl-CoA + NADPH + H(+). It functions in the pathway lipid metabolism; fatty acid biosynthesis. Its function is as follows. Component of the microsomal membrane bound fatty acid elongation system, which produces the 26-carbon very long-chain fatty acids (VLCFA) from palmitate. Catalyzes the reduction of the 3-ketoacyl-CoA intermediate that is formed in each cycle of fatty acid elongation. VLCFAs serve as precursors for ceramide and sphingolipids. This chain is Very-long-chain 3-oxoacyl-CoA reductase, found in Aspergillus niger (strain ATCC MYA-4892 / CBS 513.88 / FGSC A1513).